We begin with the raw amino-acid sequence, 183 residues long: Hypoxanthine-guanine phosphoribosyltransferase (183 aa).

Residues Arg47 and Gly48 each contribute to the diphosphate site. Mg(2+)-binding residues include Glu103 and Asp104. Asp107 serves as the catalytic Proton acceptor. Residues Lys134, 155–156, and Asp162 contribute to the GMP site; that span reads FV. Arg168 lines the diphosphate pocket.

Belongs to the purine/pyrimidine phosphoribosyltransferase family. It depends on Mg(2+) as a cofactor.

Its subcellular location is the cytoplasm. The enzyme catalyses IMP + diphosphate = hypoxanthine + 5-phospho-alpha-D-ribose 1-diphosphate. It catalyses the reaction GMP + diphosphate = guanine + 5-phospho-alpha-D-ribose 1-diphosphate. It functions in the pathway purine metabolism; IMP biosynthesis via salvage pathway; IMP from hypoxanthine: step 1/1. Its pathway is purine metabolism; GMP biosynthesis via salvage pathway; GMP from guanine: step 1/1. Functionally, purine salvage pathway enzyme that catalyzes the transfer of the ribosyl-5-phosphate group from 5-phospho-alpha-D-ribose 1-diphosphate (PRPP) to the N9 position of the 6-oxopurines hypoxanthine and guanine to form the corresponding ribonucleotides IMP (inosine 5'-monophosphate) and GMP (guanosine 5'-monophosphate), with the release of PPi. This Lactococcus lactis subsp. lactis (strain IL1403) (Streptococcus lactis) protein is Hypoxanthine-guanine phosphoribosyltransferase (hpt).